A 370-amino-acid chain; its full sequence is MIPGNDPILLTPGPLTTSLRTREAMLRDWGSWDAAFNRMTHGVCADLLKIVHGENDYVCVPLQGSGTFAVEAALGTLVPRQGCVLVPNNGAYCARLIRILQRMGIAYIELVLREDEPVSAAAVEDAFNRHSRISHVAHVHLETSAGLLNPLDDIAAVCQRHGKSLIVDAMSSFGALPIDLRRGGIDALISASGKCLEGVPGMGFVIMRRSLLEDSEGRSPSLALDLHDQYVYMRKTTQWRFTPPTHVVAALREALDQFGAEGGQPARGARYARNCAALVGAMKALGFEPFLKPEVQAPVIVTFHAPRDPAWHFAAFYAAVREAGYVLYPGKLTQVETFRVGCIGAIDANELLNAAAAIGHALERLGIRVR.

K194 is modified (N6-(pyridoxal phosphate)lysine).

This sequence belongs to the class-V pyridoxal-phosphate-dependent aminotransferase family. PhnW subfamily. Homodimer. Requires pyridoxal 5'-phosphate as cofactor.

The catalysed reaction is (2-aminoethyl)phosphonate + pyruvate = phosphonoacetaldehyde + L-alanine. Its function is as follows. Involved in phosphonate degradation. This is 2-aminoethylphosphonate--pyruvate transaminase 2 from Paraburkholderia xenovorans (strain LB400).